The chain runs to 178 residues: PEST proteolytic signal-containing nuclear protein (178 aa).

The segment covering 1 to 15 (MADGKAGEEKPEKPQ) has biased composition (basic and acidic residues). Residues 1–82 (MADGKAGEEK…FAIGSQTARK (82 aa)) form a disordered region. Ala-2 carries the post-translational modification N-acetylalanine. The segment covering 37-47 (SSSNGGESSSR) has biased composition (low complexity). At Ser-53 the chain carries Phosphoserine. Lys-64 bears the N6-acetyllysine mark. 3 positions are modified to phosphoserine: Ser-77, Ser-87, and Ser-119. The interval 134-158 (NIGRDTPTSAGPNSFNKGKHGFSDN) is disordered. Residue Thr-139 is modified to Phosphothreonine. A compositionally biased stretch (polar residues) spans 139 to 149 (TPTSAGPNSFN). Phosphoserine is present on Ser-147. Residues Lys-150 and Lys-152 each carry the N6-acetyllysine modification.

As to quaternary structure, interacts with UHRF2/NIRF. In terms of processing, ubiquitinated; mediated by UHRF2 and leading to its subsequent proteasomal degradation. N-terminally acetylated in a HYPK-dependent manner by the NatA acetyltransferase complex which is composed of NAA10 and NAA15.

It is found in the nucleus. In terms of biological role, may be involved in cell cycle regulation. This Mus musculus (Mouse) protein is PEST proteolytic signal-containing nuclear protein (Pcnp).